A 219-amino-acid chain; its full sequence is HTH-type transcriptional regulator LutR (219 aa).

Residues 1–56 form the HTH gntR-type domain; that stretch reads MIKNGELKPGDKLDSVQALAESFQVSRSAVREALSALKAMGLVEMKQGEGTYLKEF. The segment at residues 16-35 is a DNA-binding region (H-T-H motif); sequence VQALAESFQVSRSAVREALS.

In terms of biological role, negatively regulates the transcription of the lutABC operon, which is required for L-lactate utilization. LutR activity is regulated by lactate, since presence of L-lactate, that probably binds to LutR, leads to derepression of the operon. Also appears to be essential for bacilysin biosynthesis. The protein is HTH-type transcriptional regulator LutR (lutR) of Bacillus subtilis (strain 168).